The chain runs to 558 residues: Glucose-6-phosphate isomerase (558 aa).

Catalysis depends on Glu-363, which acts as the Proton donor. Active-site residues include His-394 and Lys-522.

The protein belongs to the GPI family.

It is found in the cytoplasm. The catalysed reaction is alpha-D-glucose 6-phosphate = beta-D-fructose 6-phosphate. It functions in the pathway carbohydrate biosynthesis; gluconeogenesis. Its pathway is carbohydrate degradation; glycolysis; D-glyceraldehyde 3-phosphate and glycerone phosphate from D-glucose: step 2/4. In terms of biological role, catalyzes the reversible isomerization of glucose-6-phosphate to fructose-6-phosphate. The chain is Glucose-6-phosphate isomerase from Blochmanniella floridana.